We begin with the raw amino-acid sequence, 314 residues long: WD repeat-containing protein 38 (314 aa).

7 WD repeats span residues 19–58, 61–100, 103–142, 145–184, 190–228, 231–272, and 274–312; these read QHGGEVNSSAFSPDGQMLLTGSEDGCVYGWETRSGQLLWR, GHTGPVKFCRFSPDGHLFASASCDCTVRLWDVARAKCLRV, GHQRSVETVSFSPDSRQLASGGWDKRVMLWDVQSGQMLRL, GHRDSIQSSDFSPTVNCLATGSWDSTVHIWDLRMVTPAVS, GHSANISCLCYSASGLLASGSWDKTIHIWKPTTSSLLIQ, GHVT…ETLK, and VLDVAHTCAFTPDGKILVSGAADQTRRQISRTSKSPRDP. The tract at residues 294–314 is disordered; that stretch reads AADQTRRQISRTSKSPRDPQT.

This chain is WD repeat-containing protein 38 (WDR38), found in Homo sapiens (Human).